We begin with the raw amino-acid sequence, 153 residues long: ORM1-like protein 2 (153 aa).

The Cytoplasmic segment spans residues 1 to 21 (MNVGVAHSEVNPNTRVMSSRG). The next 2 membrane-spanning stretches (helical) occupy residues 22–42 (IWLAYVISVAALHVILLSIPF) and 43–63 (FSIPVVWTLTNVIHNLVMYLL). Topologically, residues 64–105 (LHTVKGTPFETPDQGKDRLLTHWEQIDYGMQCTSSRKFLSIS) are cytoplasmic. Residues 106–126 (PVVLYLLTSFYIKYDPAHFMI) traverse the membrane as a helical segment. Over 127-153 (NTASLLSVLLPKLPQFHGVRVFGINKY) the chain is Extracellular.

Belongs to the ORM family. As to quaternary structure, ceramide-sensitive subunit of the serine palmitoyltransferase (SPT) complex, which is also composed of SPTLC1, SPTLC2/3 and SPTSSA/B.

The protein resides in the endoplasmic reticulum membrane. In terms of biological role, plays an essential role in the homeostatic regulation of sphingolipid de novo biosynthesis by modulating the activity of the serine palmitoyltransferase (SPT) in response to ceramide levels. When complexed to SPT, the binding of ceramides to its N-terminus stabilizes a conformation that block SPT substrate entry, hence preventing SPT catalytic activity. Through this mechanism, maintains ceramide levels at sufficient concentrations for the production of complex sphingolipids, but which prevents the accumulation of ceramides to levels that trigger apoptosis. This chain is ORM1-like protein 2 (ORMDL2), found in Gallus gallus (Chicken).